The following is a 596-amino-acid chain: MSGSFSPCVVFTQMWLTLLVVTPVNGQHEAAQQSVVSLQPPWTTFFRGEVVTLTCYRFGFSVPQKTKWYQKRKTVKQTPGALVIKAHTLKVHESGEYWCQADSLLPSMHVNVEFSEDFLVLQAPPAVFEGDSVVLRCYAKKGIEAETLTFYKDGKALTLHPQSSEFYIHRANLKDNGQYKCTSKKKWSFGSLYTSNTVVVQVQELFPRPVLRARPSHPIDGSPVTLTCQTQLSAQKSDARLQFCFFRNLQLLGSGCSRSSEFHIPAIWTEESKRYQCKAETVNSQVSKQSTAFIIPVQRASARFQTHIIPASKLVFEGQLLLLNCSVKGVPGPLKFSWYKKDMLNKETKILKSSNAEFKISQVNISDAGEYYCEANNSRRSFVSRAFPITIKVPVSQPVLTLSTGKTQALEGDLMTLHCQSQRGSPCILYEFFYENVSLGNSSILSGGGAYFNFSMSTERSGNYYCTADNGLGAQCSEAIRISIFDMTKNRSVPMAAGITVGLLIMAVGVFLFYCWFSRKAGGKPTSDDSRNPSDSEPQEPTYYNVPACIELQPVYSNEPEENVIYTEVRRTQPRQKHADQESESPRSRCQMAEKK.

Residues 1–26 (MSGSFSPCVVFTQMWLTLLVVTPVNG) form the signal peptide. Residues 27-496 (QHEAAQQSVV…MTKNRSVPMA (470 aa)) lie on the Extracellular side of the membrane. 5 consecutive Ig-like C2-type domains span residues 34 to 115 (SVVS…VEFS), 106 to 199 (PSMH…NTVV), 207 to 294 (PRPV…TAFI), 296 to 384 (PVQR…SFVS), and 398 to 483 (PVLT…IRIS). 3 disulfide bridges follow: Cys55–Cys99, Cys137–Cys181, and Cys228–Cys277. Residue Asn324 is glycosylated (N-linked (GlcNAc...) asparagine). Cystine bridges form between Cys325–Cys373 and Cys419–Cys466. Asn436 is a glycosylation site (N-linked (GlcNAc...) asparagine). A helical membrane pass occupies residues 497 to 517 (AGITVGLLIMAVGVFLFYCWF). The Cytoplasmic portion of the chain corresponds to 518–596 (SRKAGGKPTS…RSRCQMAEKK (79 aa)). 2 disordered regions span residues 522 to 544 (GGKP…PTYY) and 561 to 596 (EENV…AEKK). Positions 577 to 596 (KHADQESESPRSRCQMAEKK) are enriched in basic and acidic residues.

As to quaternary structure, interacts with CR2. Interacts with CD19. Phosphorylated on cytoplasmic tyrosines; required for interaction with protein tyrosine phosphatases and protein tyrosine kinases. Preferentially expressed in marginal zone B cells.

It is found in the cell membrane. Functionally, plays an important role in B-cell response to antigen that acts both as a negative or positive coreceptor. Inhibits B-cell receptor (BCR) signaling in the absence of CR2 stimulation but engagement with CR2 and the BCR lead to a superior calcium response compared to CR2 and BCR costimulation. May be involved in B-cell development and differentiation in peripheral lymphoid organs and may be useful markers of B-cell stages. May have an immunoregulatory role in marginal zone B-cells. May play a role in fertilization. This Mus musculus (Mouse) protein is Fc receptor-like protein 5 (Fcrl5).